A 336-amino-acid polypeptide reads, in one-letter code: Ferredoxin--NADP reductase 1 (336 aa).

Residues E37, K45, F50, V90, L125, D287, and T328 each contribute to the FAD site.

Belongs to the ferredoxin--NADP reductase type 2 family. In terms of assembly, homodimer. Requires FAD as cofactor.

The enzyme catalyses 2 reduced [2Fe-2S]-[ferredoxin] + NADP(+) + H(+) = 2 oxidized [2Fe-2S]-[ferredoxin] + NADPH. The sequence is that of Ferredoxin--NADP reductase 1 from Bacillus velezensis (strain DSM 23117 / BGSC 10A6 / LMG 26770 / FZB42) (Bacillus amyloliquefaciens subsp. plantarum).